The primary structure comprises 361 residues: Phospho-N-acetylmuramoyl-pentapeptide-transferase (361 aa).

Helical transmembrane passes span 25 to 45 (TGGAMVTGALFVFMFGPWIID), 72 to 92 (TPTMGGLMILSGLTVGTVLWA), 95 to 115 (LNPYVWIVLAVTLGFGFVGFY), 135 to 155 (LLIEFIIAGAACFALVWLGRA), 169 to 189 (VMLNLGWAFVVFGAFVVVGAG), 200 to 220 (GLAIVPVMIAAASFGLISYLA), 240 to 260 (LAVLCGALLGAGLGFLWFNAP), 264 to 284 (IFMGDTGSLALGGMLGSIAVA), 289 to 309 (IVLAVIGGLFVLEAVSVIVQV), and 338 to 358 (QIVIRFWIIAVMLALAGLSTL).

It belongs to the glycosyltransferase 4 family. MraY subfamily. Mg(2+) is required as a cofactor.

It is found in the cell inner membrane. It catalyses the reaction UDP-N-acetyl-alpha-D-muramoyl-L-alanyl-gamma-D-glutamyl-meso-2,6-diaminopimeloyl-D-alanyl-D-alanine + di-trans,octa-cis-undecaprenyl phosphate = di-trans,octa-cis-undecaprenyl diphospho-N-acetyl-alpha-D-muramoyl-L-alanyl-D-glutamyl-meso-2,6-diaminopimeloyl-D-alanyl-D-alanine + UMP. The protein operates within cell wall biogenesis; peptidoglycan biosynthesis. Catalyzes the initial step of the lipid cycle reactions in the biosynthesis of the cell wall peptidoglycan: transfers peptidoglycan precursor phospho-MurNAc-pentapeptide from UDP-MurNAc-pentapeptide onto the lipid carrier undecaprenyl phosphate, yielding undecaprenyl-pyrophosphoryl-MurNAc-pentapeptide, known as lipid I. This chain is Phospho-N-acetylmuramoyl-pentapeptide-transferase, found in Rhodopseudomonas palustris (strain TIE-1).